The primary structure comprises 313 residues: 7,8-didemethyl-8-hydroxy-5-deazariboflavin synthase (313 aa).

The Radical SAM core domain occupies 4–235 (ITYSPAYTLV…AEITLQIPPN (232 aa)). Residues cysteine 18, cysteine 22, and cysteine 25 each contribute to the [4Fe-4S] cluster site.

The protein belongs to the radical SAM superfamily. CofG family. As to quaternary structure, consists of two subunits, CofG and CofH. It depends on [4Fe-4S] cluster as a cofactor.

The enzyme catalyses 5-amino-5-(4-hydroxybenzyl)-6-(D-ribitylimino)-5,6-dihydrouracil + S-adenosyl-L-methionine = 7,8-didemethyl-8-hydroxy-5-deazariboflavin + 5'-deoxyadenosine + L-methionine + NH4(+) + H(+). The protein operates within cofactor biosynthesis; coenzyme F0 biosynthesis. Catalyzes the radical-mediated synthesis of 7,8-didemethyl-8-hydroxy-5-deazariboflavin from 5-amino-5-(4-hydroxybenzyl)-6-(D-ribitylimino)-5,6-dihydrouracil. This is 7,8-didemethyl-8-hydroxy-5-deazariboflavin synthase from Synechocystis sp. (strain ATCC 27184 / PCC 6803 / Kazusa).